Here is a 331-residue protein sequence, read N- to C-terminus: 3'-5' exonuclease (331 aa).

Residues 27–92 (ERVKQTNAAK…EDGPASPEKE (66 aa)) are disordered. Positions 31-43 (QTNAAKKQIATNN) are enriched in polar residues. Over residues 47–67 (KNQDTPEMIKDKENAESENPP) the composition is skewed to basic and acidic residues. Residues Ser-80 and Ser-88 each carry the phosphoserine modification. The 173-residue stretch at 118–290 (SADEVMQWVE…IGQVIYREIE (173 aa)) folds into the 3'-5' exonuclease domain. Asp-140, Glu-142, and Asp-278 together coordinate Mg(2+).

Belongs to the WRNexo family.

The protein resides in the nucleus. Its function is as follows. Has exonuclease activity on both single-stranded and duplex templates bearing overhangs, but not blunt ended duplex DNA, and cleaves in a 3'-5' direction. Essential for the formation of DNA replication focal centers. Has an important role in maintaining genome stability. The protein is 3'-5' exonuclease of Drosophila grimshawi (Hawaiian fruit fly).